The following is a 422-amino-acid chain: 26S proteasome non-ATPase regulatory subunit 11B (422 aa).

Residues 228 to 392 (AYSYFFEAFE…DVLIIFEEPP (165 aa)) enclose the PCI domain.

The protein belongs to the proteasome subunit S9 family. Component of the lid subcomplex of the 19S proteasome regulatory particle complex (also named PA700 complex). The 26S proteasome consists of a 20S proteasome core and two 19S regulatory subunits.

The protein resides in the nucleus. It localises to the cytoplasm. Its subcellular location is the cytosol. Functionally, component of the lid subcomplex of the 26S proteasome, a multiprotein complex involved in the ATP-dependent degradation of ubiquitinated proteins. In the complex, psmd11b is required for proteasome assembly. This Danio rerio (Zebrafish) protein is 26S proteasome non-ATPase regulatory subunit 11B (psmd11b).